Consider the following 375-residue polypeptide: Queuine tRNA-ribosyltransferase (375 aa).

Residue Asp90 is the Proton acceptor of the active site. Substrate-binding positions include 90 to 94 (DSGGF), Asp144, Gln190, and Gly217. The RNA binding stretch occupies residues 248-254 (GIGTPHY). Asp267 functions as the Nucleophile in the catalytic mechanism. The RNA binding; important for wobble base 34 recognition stretch occupies residues 272–276 (TRIAR). Positions 305, 307, 310, and 336 each coordinate Zn(2+).

The protein belongs to the queuine tRNA-ribosyltransferase family. In terms of assembly, homodimer. Within each dimer, one monomer is responsible for RNA recognition and catalysis, while the other monomer binds to the replacement base PreQ1. Requires Zn(2+) as cofactor.

The enzyme catalyses 7-aminomethyl-7-carbaguanine + guanosine(34) in tRNA = 7-aminomethyl-7-carbaguanosine(34) in tRNA + guanine. It functions in the pathway tRNA modification; tRNA-queuosine biosynthesis. Its function is as follows. Catalyzes the base-exchange of a guanine (G) residue with the queuine precursor 7-aminomethyl-7-deazaguanine (PreQ1) at position 34 (anticodon wobble position) in tRNAs with GU(N) anticodons (tRNA-Asp, -Asn, -His and -Tyr). Catalysis occurs through a double-displacement mechanism. The nucleophile active site attacks the C1' of nucleotide 34 to detach the guanine base from the RNA, forming a covalent enzyme-RNA intermediate. The proton acceptor active site deprotonates the incoming PreQ1, allowing a nucleophilic attack on the C1' of the ribose to form the product. After dissociation, two additional enzymatic reactions on the tRNA convert PreQ1 to queuine (Q), resulting in the hypermodified nucleoside queuosine (7-(((4,5-cis-dihydroxy-2-cyclopenten-1-yl)amino)methyl)-7-deazaguanosine). This chain is Queuine tRNA-ribosyltransferase, found in Borrelia hermsii (strain HS1 / DAH).